The primary structure comprises 293 residues: Indole-3-glycerol phosphate synthase (293 aa).

The protein belongs to the TrpC family.

The catalysed reaction is 1-(2-carboxyphenylamino)-1-deoxy-D-ribulose 5-phosphate + H(+) = (1S,2R)-1-C-(indol-3-yl)glycerol 3-phosphate + CO2 + H2O. It functions in the pathway amino-acid biosynthesis; L-tryptophan biosynthesis; L-tryptophan from chorismate: step 4/5. This chain is Indole-3-glycerol phosphate synthase, found in Rippkaea orientalis (strain PCC 8801 / RF-1) (Cyanothece sp. (strain PCC 8801)).